The sequence spans 316 residues: Bifunctional protein FolD (316 aa).

Residues glycine 165–serine 167 and isoleucine 231 contribute to the NADP(+) site.

The protein belongs to the tetrahydrofolate dehydrogenase/cyclohydrolase family. Homodimer.

It catalyses the reaction (6R)-5,10-methylene-5,6,7,8-tetrahydrofolate + NADP(+) = (6R)-5,10-methenyltetrahydrofolate + NADPH. The enzyme catalyses (6R)-5,10-methenyltetrahydrofolate + H2O = (6R)-10-formyltetrahydrofolate + H(+). It functions in the pathway one-carbon metabolism; tetrahydrofolate interconversion. Catalyzes the oxidation of 5,10-methylenetetrahydrofolate to 5,10-methenyltetrahydrofolate and then the hydrolysis of 5,10-methenyltetrahydrofolate to 10-formyltetrahydrofolate. This Sphingobium chlorophenolicum protein is Bifunctional protein FolD.